The sequence spans 399 residues: MAMRPGPLWLLGLALCALGGGHGPRPPHTCPQRRLGARERRDMQREILAVLGLPGRPRPRAQPAAARQPASAPLFMLDLYHAMTDDDDGGPPQAHLGRADLVMSFVNMVERDRTLGYQEPHWKEFHFDLTQIPAGEAVTAAEFRIYKEPSTHPLNTTLHISMFEVVQEHSNRESDLFFLDLQTLRSGDEGWLVLDITAASDRWLLNHHKDLGLRLYVETADGHSMDPGLAGLLGRQAPRSRQPFMVTFFRASQSPVRAPRAARPLKRRQPKKTNELPHPNKLPGIFDDGHGSRGREVCRRHELYVSFRDLGWLDWVIAPQGYSAYYCEGECAFPLDSCMNATNHAILQSLVHLMKPDVVPKACCAPTKLSATSVLYYDSSNNVILRKHRNMVVKACGCH.

Positions 1 to 19 are cleaved as a signal peptide; sequence MAMRPGPLWLLGLALCALG. The propeptide occupies 20–260; it reads GGHGPRPPHT…ASQSPVRAPR (241 aa). An N-linked (GlcNAc...) asparagine glycan is attached at Asn-155. The segment at 257 to 286 is disordered; that stretch reads RAPRAARPLKRRQPKKTNELPHPNKLPGIF. Intrachain disulfides connect Cys-298–Cys-364, Cys-327–Cys-396, and Cys-331–Cys-398. An N-linked (GlcNAc...) asparagine glycan is attached at Asn-340.

It belongs to the TGF-beta family. As to quaternary structure, homodimer; disulfide-linked. Expressed in testis. expressed in trophoblast cells of the labyrinthine region of the placenta and in the inner root sheath of hair follicles of early postnatal skin. Expressed predominantly in the neonatal mouse spermatogonia.

The protein localises to the secreted. Functionally, growth factor of the TGF-beta superfamily that plays important role in various biological processes, including spermatogenesis, osteogenesis, steroidogenesis as well as regulation of energy balance. Initiates the canonical BMP signaling cascade by associating with type I receptor BMPR1A and type II receptor BMPR2. Once all three components are bound together in a complex at the cell surface, BMPR2 phosphorylates and activates BMPR1A. In turn, BMPR1A propagates signal by phosphorylating SMAD1/5/8 that travel to the nucleus and act as activators and repressors of transcription of target genes. In addition, activates the SMAD2/3 pathway. This is Bone morphogenetic protein 8A (Bmp8a) from Mus musculus (Mouse).